We begin with the raw amino-acid sequence, 420 residues long: D-tagatose-1,6-bisphosphate aldolase subunit GatZ (420 aa).

It belongs to the GatZ/KbaZ family. GatZ subfamily. As to quaternary structure, forms a complex with GatY.

It functions in the pathway carbohydrate metabolism; D-tagatose 6-phosphate degradation; D-glyceraldehyde 3-phosphate and glycerone phosphate from D-tagatose 6-phosphate: step 2/2. Its function is as follows. Component of the tagatose-1,6-bisphosphate aldolase GatYZ that is required for full activity and stability of the Y subunit. Could have a chaperone-like function for the proper and stable folding of GatY. When expressed alone, GatZ does not show any aldolase activity. Is involved in the catabolism of galactitol. The sequence is that of D-tagatose-1,6-bisphosphate aldolase subunit GatZ from Escherichia coli O7:K1 (strain IAI39 / ExPEC).